The sequence spans 189 residues: Riboflavin kinase (189 aa).

Mg(2+) is bound by residues threonine 42 and asparagine 44. Catalysis depends on glutamate 124, which acts as the Nucleophile.

This sequence belongs to the flavokinase family. Requires Zn(2+) as cofactor. Mg(2+) serves as cofactor.

The enzyme catalyses riboflavin + ATP = FMN + ADP + H(+). It functions in the pathway cofactor biosynthesis; FMN biosynthesis; FMN from riboflavin (ATP route): step 1/1. Its function is as follows. Catalyzes the phosphorylation of riboflavin (vitamin B2) to form flavin mononucleotide (FMN) coenzyme. The protein is Riboflavin kinase (FMN1) of Candida glabrata (strain ATCC 2001 / BCRC 20586 / JCM 3761 / NBRC 0622 / NRRL Y-65 / CBS 138) (Yeast).